A 179-amino-acid polypeptide reads, in one-letter code: Protein PLASTID REDOX INSENSITIVE 2, chloroplastic (179 aa).

Residues 1–69 (MASMHEALFS…SLSRRGFVCR (69 aa)) constitute a chloroplast transit peptide.

Binds DNA when in complex with CSP41b.

The protein resides in the plastid. Its subcellular location is the chloroplast stroma. The protein localises to the chloroplast nucleoid. In terms of biological role, involved in redox-mediated retrograde signaling to synchronize the expression of photosynthetic genes from both the nuclear and plastidic genomes, especially in excess light conditions. Required for full expression of genes transcribed by the plastid-encoded RNA polymerase (PEP). Essential for embryo development. This chain is Protein PLASTID REDOX INSENSITIVE 2, chloroplastic, found in Arabidopsis thaliana (Mouse-ear cress).